The following is a 117-amino-acid chain: Large ribosomal subunit protein uL18 (117 aa).

This sequence belongs to the universal ribosomal protein uL18 family. As to quaternary structure, part of the 50S ribosomal subunit; part of the 5S rRNA/L5/L18/L25 subcomplex. Contacts the 5S and 23S rRNAs.

Functionally, this is one of the proteins that bind and probably mediate the attachment of the 5S RNA into the large ribosomal subunit, where it forms part of the central protuberance. The chain is Large ribosomal subunit protein uL18 from Yersinia pseudotuberculosis serotype O:1b (strain IP 31758).